We begin with the raw amino-acid sequence, 271 residues long: Probable ribosome biogenesis GTPase A (271 aa).

In terms of domain architecture, CP-type G spans 21–175 (HDQLKKLASS…LSDTPGVFFK (155 aa)). Residues 127 to 132 (NVGKSS) and Gly-171 each bind GTP.

This sequence belongs to the TRAFAC class YlqF/YawG GTPase family. MTG1 subfamily.

Its subcellular location is the cytoplasm. Required for a late step of 50S ribosomal subunit assembly. Has GTPase activity. Binds to the 23S rRNA. The sequence is that of Probable ribosome biogenesis GTPase A (rbgA) from Mycoplasma pneumoniae (strain ATCC 29342 / M129 / Subtype 1) (Mycoplasmoides pneumoniae).